Here is a 125-residue protein sequence, read N- to C-terminus: Large ribosomal subunit protein bL12 (125 aa).

The protein belongs to the bacterial ribosomal protein bL12 family. As to quaternary structure, homodimer. Part of the ribosomal stalk of the 50S ribosomal subunit. Forms a multimeric L10(L12)X complex, where L10 forms an elongated spine to which 2 to 4 L12 dimers bind in a sequential fashion. Binds GTP-bound translation factors.

Its function is as follows. Forms part of the ribosomal stalk which helps the ribosome interact with GTP-bound translation factors. Is thus essential for accurate translation. This is Large ribosomal subunit protein bL12 from Paraburkholderia phymatum (strain DSM 17167 / CIP 108236 / LMG 21445 / STM815) (Burkholderia phymatum).